Here is a 228-residue protein sequence, read N- to C-terminus: ATP synthase subunit a (228 aa).

The next 6 membrane-spanning stretches (helical) occupy residues 19–39 (AIYIFHFLLVVAITMFIAVAV), 81–101 (LIATIGFIVFLSNIIGLIPGF), 107–127 (SLNLTLSLTLCVFFYYHFEGI), 136–156 (FAGFCGPVKAIAPFMFVIEVI), 178–198 (LFLLVMLTLAPVLVPMIPYAL), and 204–224 (ILQAFIFMVLSYVYLAGAVVV).

The protein belongs to the ATPase A chain family. F-type ATPases have 2 components, CF(1) - the catalytic core - and CF(0) - the membrane proton channel. CF(1) has five subunits: alpha(3), beta(3), gamma(1), delta(1), epsilon(1). CF(0) has three main subunits: a(1), b(2) and c(9-12). The alpha and beta chains form an alternating ring which encloses part of the gamma chain. CF(1) is attached to CF(0) by a central stalk formed by the gamma and epsilon chains, while a peripheral stalk is formed by the delta and b chains.

The protein resides in the cell inner membrane. Key component of the proton channel; it plays a direct role in the translocation of protons across the membrane. The protein is ATP synthase subunit a of Campylobacter hominis (strain ATCC BAA-381 / DSM 21671 / CCUG 45161 / LMG 19568 / NCTC 13146 / CH001A).